The sequence spans 392 residues: Galactokinase (392 aa).

Alpha-D-galactose contacts are provided by Arg37, Glu43, His44, and Asp46. ATP is bound by residues Gly136, Gly138, Ser140, and Ser141. Asp186 contributes to the alpha-D-galactose binding site. Asp186 functions as the Proton acceptor in the catalytic mechanism. Ser230 is modified (phosphoserine). Tyr236 contacts alpha-D-galactose.

This sequence belongs to the GHMP kinase family. GalK subfamily. Homodimer.

The catalysed reaction is alpha-D-galactose + ATP = alpha-D-galactose 1-phosphate + ADP + H(+). The protein operates within carbohydrate metabolism; galactose metabolism. Catalyzes the transfer of a phosphate from ATP to alpha-D-galactose and participates in the first committed step in the catabolism of galactose. The chain is Galactokinase (GALK1) from Canis lupus familiaris (Dog).